Consider the following 228-residue polypeptide: 7-cyano-7-deazaguanine synthase (228 aa).

9-19 is a binding site for ATP; that stretch reads LSGGPDSTTVL. Cys-193, Cys-203, Cys-206, and Cys-209 together coordinate Zn(2+).

The protein belongs to the QueC family. It depends on Zn(2+) as a cofactor.

It catalyses the reaction 7-carboxy-7-deazaguanine + NH4(+) + ATP = 7-cyano-7-deazaguanine + ADP + phosphate + H2O + H(+). Its pathway is purine metabolism; 7-cyano-7-deazaguanine biosynthesis. Functionally, catalyzes the ATP-dependent conversion of 7-carboxy-7-deazaguanine (CDG) to 7-cyano-7-deazaguanine (preQ(0)). The sequence is that of 7-cyano-7-deazaguanine synthase from Rickettsia massiliae (strain Mtu5).